The primary structure comprises 399 residues: Endonuclease III homolog 1 (399 aa).

A mitochondrion-targeting transit peptide spans 1 to 26 (MQKISKYSSMAILRKRPLVKTETGPE). The Bipartite nuclear localization signal motif lies at 14 to 37 (RKRPLVKTETGPESELLPEKRTKI). Residue K194 forms a Glycyl lysine isopeptide (Lys-Gly) (interchain with G-Cter in SUMO) linkage. In terms of domain architecture, HhH spans 223–247 (FSSDVPATINELLGLPGVGPKMAYL). K243 (nucleophile; for N-glycosylase activity) is an active-site residue.

Belongs to the Nth/MutY family. In terms of processing, monosumoylated. Sumoylation is associated with targeting of NTG1 to nuclei containing oxidative DNA damage.

The protein resides in the nucleus. The protein localises to the mitochondrion. It carries out the reaction 2'-deoxyribonucleotide-(2'-deoxyribose 5'-phosphate)-2'-deoxyribonucleotide-DNA = a 3'-end 2'-deoxyribonucleotide-(2,3-dehydro-2,3-deoxyribose 5'-phosphate)-DNA + a 5'-end 5'-phospho-2'-deoxyribonucleoside-DNA + H(+). In terms of biological role, bifunctional DNA N-glycosylase with associated apurinic/apyrimidinic (AP) lyase function that catalyzes the first step in base excision repair (BER), the primary repair pathway for the repair of oxidative DNA damage. The DNA N-glycosylase activity releases the damaged DNA base from DNA by cleaving the N-glycosidic bond, leaving an AP site. The AP-lyase activity cleaves the phosphodiester bond 3' to the AP site by a beta-elimination. Primarily recognizes and repairs oxidative base damage of pyrimidines, but also purine-derived lesions, alkylation damage and cytosine photoproducts generated by UV irradiation as well as abasic sites. Also has 8-oxoguanine DNA glycosylase activity. The AP lyase can incise AP sites opposite all four bases. May also play a role in the regulation of mtDNA copy number by introducing a double-stranded break (DSB) at the mtDNA replication origin ori5, initiating the rolling-circle mtDNA replication. This chain is Endonuclease III homolog 1, found in Saccharomyces cerevisiae (strain ATCC 204508 / S288c) (Baker's yeast).